Consider the following 659-residue polypeptide: Pentatricopeptide repeat-containing protein At3g26782, mitochondrial (659 aa).

The N-terminal 24 residues, Met-1–Glu-24, are a transit peptide targeting the mitochondrion. 12 PPR repeats span residues Asp-40–Pro-74, Thr-75–Ser-109, Asp-110–Ser-144, Trp-145–Asp-171, Asp-182–Arg-216, Gly-217–Lys-249, Asp-250–Thr-284, Asn-286–Asp-320, Asp-321–Lys-351, Asn-352–Pro-386, Asn-387–Pro-422, and Gly-423–Lys-453. Residues Ile-458–Asn-533 form a type E motif region. The segment at Gly-534 to Leu-564 is type E(+) motif. The tract at residues Glu-565 to Trp-659 is type DYW motif.

Belongs to the PPR family. PCMP-H subfamily.

It is found in the mitochondrion. The chain is Pentatricopeptide repeat-containing protein At3g26782, mitochondrial (PCMP-H34) from Arabidopsis thaliana (Mouse-ear cress).